A 236-amino-acid chain; its full sequence is Eukaryotic translation initiation factor 3 subunit J (236 aa).

The segment at 1–84 (MADDWESAAD…RLEEEAEAQR (84 aa)) is disordered. Residues 28–46 (GEDEDEDIKDSWEDEEEKK) are compositionally biased toward acidic residues. Composition is skewed to basic and acidic residues over residues 47 to 58 (DEEKPTKTEAPA) and 68 to 77 (AKLEQQARLE).

Belongs to the eIF-3 subunit J family. Component of the eukaryotic translation initiation factor 3 (eIF-3) complex. The eIF-3 complex interacts with pix.

It localises to the cytoplasm. Component of the eukaryotic translation initiation factor 3 (eIF-3) complex, which is involved in protein synthesis of a specialized repertoire of mRNAs and, together with other initiation factors, stimulates binding of mRNA and methionyl-tRNAi to the 40S ribosome. The eIF-3 complex specifically targets and initiates translation of a subset of mRNAs involved in cell proliferation. This chain is Eukaryotic translation initiation factor 3 subunit J, found in Drosophila yakuba (Fruit fly).